A 1196-amino-acid polypeptide reads, in one-letter code: Phosphoglucan, water dikinase, chloroplastic (1196 aa).

The N-terminal 54 residues, 1 to 54, are a transit peptide targeting the chloroplast; that stretch reads MESIGSHCCSSPFTFITRNSSSSLPRLVNITHRVNLSHQSHRLRNSNSRLTCTA. Thr55 is subject to N-acetylthreonine. The region spanning 66–166 is the CBM20 domain; it reads KKDGSGTKVR…NFSVVCHWDA (101 aa). The tract at residues 174–200 is disordered; the sequence is PQEVGNDDDVGDGGHERDNHDVGDDRV. Basic and acidic residues predominate over residues 185–200; the sequence is DGGHERDNHDVGDDRV. The active-site Tele-phosphohistidine intermediate is His759. A disordered region spans residues 804 to 855; that stretch reads LSTEGRSRTSKSSATKKTDKNSLSKKKTDKKSLSIDDEESKPGSSSSNSLLY.

The protein belongs to the PEP-utilizing enzyme family. As to quaternary structure, homodimer. Requires Mg(2+) as cofactor. In all starch containing tissues (e.g. roots, leaves, stems, inflorescence and siliques).

The protein resides in the plastid. It localises to the chloroplast. It carries out the reaction [(1-&gt;4)-6-phospho-alpha-D-glucosyl](n) + n ATP + n H2O = [(1-&gt;4)-3,6-bisphospho-alpha-D-glucosyl](n) + n AMP + n phosphate + 2n H(+). Mediates the incorporation of phosphate into starch-like phospho-alpha-glucan, mostly at the C-3 position of glucose units. Required for starch degradation, suggesting that the phosphate content of starch regulates its degradability. This is Phosphoglucan, water dikinase, chloroplastic (GWD3) from Arabidopsis thaliana (Mouse-ear cress).